A 569-amino-acid chain; its full sequence is MLSVKQELLAALAGELEKLSPGSAGRAAFESPKVAAHGDFACTAAMQLAKPLKLNPRALGEQLKAALEATPAFARWVDAIEIAGPGFLNIRLKAAAKQEIVREVLSAGDRFGYQKDNGQRVLVEFVSANPTGPLHVGHGRQAALGDAICNLFSTQGWSVHREFYYNDAGVQIDTLTKSTQLRARGFKPGDECWPTDPENPASKTFYNGDYIQDIANDFLAKKTVKADDREFTANGDVEDYDNIRQFAVAYLRNEQDKDLQAFNLHFDQYYLESSLYTSGRVEATVNRLVEKGHTYEQDGALWLKSTDYGDDKDRVMRKKDGTYTYFVPDVAYHIAKWERGFAKVVNIQGTDHHGTIARVRAGLQAADVGIPQGYPDYVLHTMVRVVKGGKEVKIGKRAGSYVTLRDLIEWTSKDAVRFFLLSRKPDTEYTFDVDLAVAQNNDNPVYYVQYAHARIQSVLRAWAEAGGGDVASLKDVDLSALEGPQAQALMLQLAKYPEMLTAAAEGEAPHDVTFYLRDLAASYHSYYDAERILVDDEAVKRARLALVAATAQVLHNGLKVLGVDAPARM.

The 'HIGH' region signature appears at 128-138 (ANPTGPLHVGH).

Belongs to the class-I aminoacyl-tRNA synthetase family. Monomer.

It is found in the cytoplasm. The enzyme catalyses tRNA(Arg) + L-arginine + ATP = L-arginyl-tRNA(Arg) + AMP + diphosphate. The polypeptide is Arginine--tRNA ligase (Paracidovorax citrulli (strain AAC00-1) (Acidovorax citrulli)).